The chain runs to 303 residues: Methionyl-tRNA formyltransferase (303 aa).

A (6S)-5,6,7,8-tetrahydrofolate-binding site is contributed by 110–113; the sequence is SLLP.

It belongs to the Fmt family.

It carries out the reaction L-methionyl-tRNA(fMet) + (6R)-10-formyltetrahydrofolate = N-formyl-L-methionyl-tRNA(fMet) + (6S)-5,6,7,8-tetrahydrofolate + H(+). Attaches a formyl group to the free amino group of methionyl-tRNA(fMet). The formyl group appears to play a dual role in the initiator identity of N-formylmethionyl-tRNA by promoting its recognition by IF2 and preventing the misappropriation of this tRNA by the elongation apparatus. The protein is Methionyl-tRNA formyltransferase of Ehrlichia ruminantium (strain Gardel).